The chain runs to 270 residues: Gap junction beta-3 protein (270 aa).

The Cytoplasmic segment spans residues 1 to 20 (MDWKKLQDLLSGVNQYSTAF). Residues 21 to 40 (GRIWLSVVFVFRVLVYVVAA) traverse the membrane as a helical segment. Topologically, residues 41-75 (ERVWGDEQKDFDCNTRQPGCTNVCYDNFFPISNIR) are extracellular. The helical transmembrane segment at 76–98 (LWALQLIFVTCPSMLVILHVAYR) threads the bilayer. Residues 99 to 126 (EERERKHRQKHGEHCAKLYSHPGKKHGG) lie on the Cytoplasmic side of the membrane. A helical transmembrane segment spans residues 127–149 (LWWTYLFSLIFKLIIELVFLYVL). Residues 150 to 188 (HTLWHGFTMPRLVQCASVVPCPNTVDCYIARPTEKKVFT) lie on the Extracellular side of the membrane. A helical membrane pass occupies residues 189-211 (YFMVGASAVCIILTICEICYLIF). Topologically, residues 212–270 (HRIMRGLSKDKSTKSISSPKSSSRASTCRCHHKLLESGDLEAVPADDKLQASAPSLTPI) are cytoplasmic.

The protein belongs to the connexin family. Beta-type (group I) subfamily. As to quaternary structure, a connexon is composed of a hexamer of connexins. Interacts with CNST.

It is found in the cell membrane. The protein localises to the cell junction. Its subcellular location is the gap junction. One gap junction consists of a cluster of closely packed pairs of transmembrane channels, the connexons, through which materials of low MW diffuse from one cell to a neighboring cell. The polypeptide is Gap junction beta-3 protein (Gjb3) (Rattus norvegicus (Rat)).